A 485-amino-acid chain; its full sequence is Glutamyl-tRNA(Gln) amidotransferase subunit A (485 aa).

Active-site charge relay system residues include lysine 78 and serine 153. Residue serine 177 is the Acyl-ester intermediate of the active site.

The protein belongs to the amidase family. GatA subfamily. In terms of assembly, heterotrimer of A, B and C subunits.

It catalyses the reaction L-glutamyl-tRNA(Gln) + L-glutamine + ATP + H2O = L-glutaminyl-tRNA(Gln) + L-glutamate + ADP + phosphate + H(+). Functionally, allows the formation of correctly charged Gln-tRNA(Gln) through the transamidation of misacylated Glu-tRNA(Gln) in organisms which lack glutaminyl-tRNA synthetase. The reaction takes place in the presence of glutamine and ATP through an activated gamma-phospho-Glu-tRNA(Gln). This chain is Glutamyl-tRNA(Gln) amidotransferase subunit A, found in Bacillus anthracis (strain A0248).